We begin with the raw amino-acid sequence, 352 residues long: Leukotriene B4 receptor 1 (352 aa).

Topologically, residues 1 to 19 (MNTTSSAAPPSLGVEFISL) are extracellular. Asn-2 carries an N-linked (GlcNAc...) asparagine glycan. Residues 20-42 (LAIILLSVALAVGLPGNSFVVWS) form a helical membrane-spanning segment. At 43-54 (ILKRMQKRSVTA) the chain is on the cytoplasmic side. Residues 55–75 (LMVLNLALADLAVLLTAPFFL) traverse the membrane as a helical segment. Residues 76 to 91 (HFLAQGTWSFGLAGCR) are Extracellular-facing. The chain crosses the membrane as a helical span at residues 92–113 (LCHYVCGVSMYASVLLITAMSL). At 114–138 (DRSLAVARPFVSQKLRTKAMARRVL) the chain is on the cytoplasmic side. The chain crosses the membrane as a helical span at residues 139–159 (AGIWVLSFLLATPVLAYRTVV). At 160–178 (PWKTNMSLCFPRYPSEGHR) the chain is on the extracellular side. A glycan (N-linked (GlcNAc...) asparagine) is linked at Asn-164. The chain crosses the membrane as a helical span at residues 179–199 (AFHLIFEAVTGFLLPFLAVVA). Residues 200 to 221 (SYSDIGRRLQARRFRRSRRTGR) are Cytoplasmic-facing. The helical transmembrane segment at 222 to 242 (LVVLIILTFAAFWLPYHVVNL) threads the bilayer. The Extracellular segment spans residues 243-268 (AEAGRALAGQAAGLGLVGKRLSLARN). Residues 269–289 (VLIALAFLSSSVNPVLYACAG) traverse the membrane as a helical segment. The Cytoplasmic segment spans residues 290 to 352 (GGLLRSAGVG…SSPLKLNELN (63 aa)). Composition is skewed to polar residues over residues 310-326 (SEAS…QTAR) and 338-352 (ESLT…NELN). Residues 310-352 (SEASSTRRGGSLGQTARSGPAALEPGPSESLTASSPLKLNELN) are disordered.

The protein belongs to the G-protein coupled receptor 1 family. In terms of processing, phosphorylated by GRK6 upon leukotriene B4 binding; which promotes desensitization. Expressed at highest levels in heart, skeletal muscle and at lower levels in brain and liver. High level of expression in lymphoid tissues.

The protein localises to the cell membrane. Receptor for extracellular ATP &gt; UTP and ADP. The activity of this receptor is mediated by G proteins which activate a phosphatidylinositol-calcium second messenger system. May be the cardiac P2Y receptor involved in the regulation of cardiac muscle contraction through modulation of L-type calcium currents. Is a receptor for leukotriene B4, a potent chemoattractant involved in inflammation and immune response. The polypeptide is Leukotriene B4 receptor 1 (LTB4R) (Homo sapiens (Human)).